The following is a 1412-amino-acid chain: DNA-directed RNA polymerase subunit beta' (1412 aa).

Residues C70, C72, C85, and C88 each coordinate Zn(2+). Positions 458, 460, and 462 each coordinate Mg(2+). C813, C887, C894, and C897 together coordinate Zn(2+). The segment at E1388–Q1412 is disordered. Residues T1393–E1405 are compositionally biased toward low complexity.

This sequence belongs to the RNA polymerase beta' chain family. The RNAP catalytic core consists of 2 alpha, 1 beta, 1 beta' and 1 omega subunit. When a sigma factor is associated with the core the holoenzyme is formed, which can initiate transcription. Requires Mg(2+) as cofactor. It depends on Zn(2+) as a cofactor.

It catalyses the reaction RNA(n) + a ribonucleoside 5'-triphosphate = RNA(n+1) + diphosphate. In terms of biological role, DNA-dependent RNA polymerase catalyzes the transcription of DNA into RNA using the four ribonucleoside triphosphates as substrates. This is DNA-directed RNA polymerase subunit beta' from Methylibium petroleiphilum (strain ATCC BAA-1232 / LMG 22953 / PM1).